Reading from the N-terminus, the 142-residue chain is Large ribosomal subunit protein uL13 (142 aa).

It belongs to the universal ribosomal protein uL13 family. In terms of assembly, part of the 50S ribosomal subunit.

In terms of biological role, this protein is one of the early assembly proteins of the 50S ribosomal subunit, although it is not seen to bind rRNA by itself. It is important during the early stages of 50S assembly. This Coxiella burnetii (strain CbuG_Q212) (Coxiella burnetii (strain Q212)) protein is Large ribosomal subunit protein uL13.